The following is a 2442-amino-acid chain: Centrosome-associated protein CEP250 (2442 aa).

4 coiled-coil regions span residues 95-158 (NLDE…KESQ), 244-352 (AQLL…TQVM), 395-1172 (LTRR…EQQP), and 1243-2227 (SALH…KERL). Composition is skewed to basic and acidic residues over residues 1273-1289 (LTDTEAEKSQVHTELQD) and 1699-1715 (LTTQRQLMQERAEEGKG). Disordered stretches follow at residues 1273–1308 (LTDTEAEKSQVHTELQDLQRQLSQNQEEKSKWEGKQ), 1699–1725 (LTTQRQLMQERAEEGKGPSKAQRGSLE), and 1820–1839 (EALQQEQQQAQGQEERVKEK). Over residues 1820–1831 (EALQQEQQQAQG) the composition is skewed to low complexity. S2138 bears the Phosphoserine mark. T2218 carries the phosphothreonine modification. The disordered stretch occupies residues 2223 to 2244 (EKERLHSPGATSTAELGSRGEQ). 3 positions are modified to phosphoserine: S2229, S2252, and S2322. A coiled-coil region spans residues 2262 to 2376 (GMEKQSWRQR…RKQKQDYITR (115 aa)). Disordered regions lie at residues 2307–2345 (RRKLKREAMRAAQAGSLEISKATASSPTQQDGRGQKNSD) and 2416–2442 (ESLTQSLTSPGPVLLHPSPSTTQAASR). Positions 2328 to 2338 (ATASSPTQQDG) are enriched in polar residues. A phosphoserine; by NEK2 mark is found at S2417 and S2421. Positions 2433-2442 (SPSTTQAASR) are enriched in polar residues.

Monomer and homodimer. Forms a complex in vitro with both NEK2 kinase and the PPP1CC catalytic subunit of protein phosphatase 1 (PP1). Interacts with CEP135. Interacts with CROCC/rootletin. Interacts with CNTLN. Interacts with NIN (via C-terminus). Interacts with CCDC102B (via N-terminus); the interaction results in recruitment of CCDC102B to the proximal ends of centrioles. Differentially phosphorylated during cell cycle. Phosphorylation may regulate association/dissociation from centrosome. During M phase of mitosis, C-terminal part is phosphorylated by NEK2, suggesting that it may trigger the dissociation from the mitotic centrosome. Dephosphorylated in vitro by the PP1 phosphatase. Ubiquitously and weakly expressed.

It is found in the cytoplasm. The protein resides in the perinuclear region. Its subcellular location is the cytoskeleton. It localises to the microtubule organizing center. The protein localises to the centrosome. It is found in the centriole. The protein resides in the cilium basal body. Its subcellular location is the cell projection. It localises to the cilium. The protein localises to the photoreceptor outer segment. It is found in the photoreceptor inner segment. In terms of biological role, plays an important role in centrosome cohesion during interphase. Recruits CCDC102B to the proximal ends of centrioles. Maintains centrosome cohesion by forming intercentriolar linkages. Accumulates at the proximal end of each centriole, forming supramolecular assemblies with viscous material properties that promote organelle cohesion. May be involved in ciliogenesis. In Homo sapiens (Human), this protein is Centrosome-associated protein CEP250 (CEP250).